Here is a 163-residue protein sequence, read N- to C-terminus: 5-hydroxymethyl-dUMP N-hydrolase (163 aa).

Residue Ala-2 is modified to N-acetylalanine. Gly-16 lines the 5-hydroxymethyl-dUMP pocket. Ser-17 is modified (phosphoserine). 6 residues coordinate 5-hydroxymethyl-dUMP: Ile-18, Arg-19, Gly-20, Ser-87, Gly-89, and Glu-93. Ser-87 carries the phosphoserine modification. 4 positions are modified to phosphoserine: Ser-112, Ser-117, Ser-127, and Ser-158. Ser-117 is a 5-hydroxymethyl-dUMP binding site.

In terms of assembly, monomer and homodimer. In terms of tissue distribution, highly expressed in heart, kidney, liver and spleen. Weakly expressed in lung and skeletal muscle.

The protein localises to the cytoplasm. The protein resides in the nucleus. It carries out the reaction 5-hydroxymethyl-dUMP + H2O = 5-hydroxymethyluracil + 2-deoxy-D-ribose 5-phosphate. Its function is as follows. Part of a nucleotide salvage pathway that eliminates epigenetically modified 5-hydroxymethyl-dCMP (hmdCMP) in a two-step process entailing deamination to cytotoxic 5-hydroxymethyl-dUMP (hmdUMP), followed by its hydrolysis into 5-hydroxymethyluracil (hmU) and 2-deoxy-D-ribose 5-phosphate (deoxyribosephosphate). Catalyzes the second step in that pathway, the hydrolysis of the N-glycosidic bond in hmdUMP, degrading this cytotoxic nucleotide to avoid its genomic integration. The sequence is that of 5-hydroxymethyl-dUMP N-hydrolase from Rattus norvegicus (Rat).